Consider the following 183-residue polypeptide: METYMDTLNQLSTICFGHGDGFGINTNILETNIINLSVVIGVVVSFGGDALRSLLDNRKETILANLQEADLRAKEAQEKLAAARLQLEQAQTKAQEIRQQGTITAEQEKQLCIKQAEADMARLEDVKQQTLRLQQQRAMSQVSQQVIALALQKVRQKLQDAANSAFHTSVNNSNIAFFTKYKV.

Residues 33 to 51 (IINLSVVIGVVVSFGGDAL) form a helical membrane-spanning segment.

This sequence belongs to the ATPase B chain family. In terms of assembly, F-type ATPases have 2 components, F(1) - the catalytic core - and F(0) - the membrane proton channel. F(1) has five subunits: alpha(3), beta(3), gamma(1), delta(1), epsilon(1). F(0) has four main subunits: a(1), b(1), b'(1) and c(10-14). The alpha and beta chains form an alternating ring which encloses part of the gamma chain. F(1) is attached to F(0) by a central stalk formed by the gamma and epsilon chains, while a peripheral stalk is formed by the delta, b and b' chains.

It is found in the plastid. It localises to the chloroplast thylakoid membrane. F(1)F(0) ATP synthase produces ATP from ADP in the presence of a proton or sodium gradient. F-type ATPases consist of two structural domains, F(1) containing the extramembraneous catalytic core and F(0) containing the membrane proton channel, linked together by a central stalk and a peripheral stalk. During catalysis, ATP synthesis in the catalytic domain of F(1) is coupled via a rotary mechanism of the central stalk subunits to proton translocation. Functionally, component of the F(0) channel, it forms part of the peripheral stalk, linking F(1) to F(0). In Oltmannsiellopsis viridis (Marine flagellate), this protein is ATP synthase subunit b, chloroplastic.